A 510-amino-acid chain; its full sequence is uncharacterized protein (510 aa).

Topologically, residues 1–89 (MTSSLDDIEP…QGQRKKVLLK (89 aa)) are lumenal. The disordered stretch occupies residues 38-76 (AVSQGVPDMDGQTTDSSKDPEPNSEDKKAFPPSSGSFFS). Residues 53–66 (SSKDPEPNSEDKKA) show a composition bias toward basic and acidic residues. Residues 67–76 (FPPSSGSFFS) show a composition bias toward low complexity. The helical transmembrane segment at 90–110 (FVFTNCLLAIICFTMFVLFWG) threads the bilayer. Over 111–123 (ALYDTSKYLHKVK) the chain is Cytoplasmic. The chain crosses the membrane as a helical span at residues 124-144 (LLVVIQEPPVVILDNNSSMVV). The Lumenal segment spans residues 145 to 312 (PSISYALPTF…TDRILLAPTQ (168 aa)). The helical transmembrane segment at 313–333 (IGVVYCLLLTFFQFLLYGPLH) threads the bilayer. Over 334–349 (VEMAKVLRPANGLIYR) the chain is Cytoplasmic. Residues 350-370 (IAMSWFTFFFASLFFCTTTAI) form a helical membrane-spanning segment. The Lumenal segment spans residues 371-381 (FQVDFTKSFGR). The helical transmembrane segment at 382 to 402 (GGFVVYWMSTWLFMLAAGGAN) threads the bilayer. The Cytoplasmic portion of the chain corresponds to 403–416 (ENAVMLVITLGPQY). The chain crosses the membrane as a helical span at residues 417 to 437 (LGFWILSFVILNIAPSFFPLA). At 438 to 474 (LNNNVYRYGYMMPVHNVIDIYRVIFFDVTRRKMGRNY) the chain is on the lumenal side. Residues 475-495 (GILVALIALNTALLPFVGKYA) form a helical membrane-spanning segment. Over 496-510 (SRKLKQKALVAAKQS) the chain is Cytoplasmic.

This sequence to yeast SNG1.

It is found in the endoplasmic reticulum membrane. This is an uncharacterized protein from Saccharomyces cerevisiae (strain ATCC 204508 / S288c) (Baker's yeast).